The primary structure comprises 231 residues: DNA mismatch repair protein MutH (231 aa).

Belongs to the MutH family.

The protein localises to the cytoplasm. Its function is as follows. Sequence-specific endonuclease that cleaves unmethylated GATC sequences. It is involved in DNA mismatch repair. The protein is DNA mismatch repair protein MutH of Shewanella woodyi (strain ATCC 51908 / MS32).